Reading from the N-terminus, the 109-residue chain is MSEFKRIPPEQAQALREQGAVVVDIRDPQTYALNHISGSQHLDNHSISDFIRAADLDAPLVVVCYHGNSSQSAAAYLVSQGFSDVYSLDGGFELWRSTYPAETAQGNPE.

Residues 16–104 form the Rhodanese domain; it reads REQGAVVVDI…WRSTYPAETA (89 aa). The active-site Cysteine persulfide intermediate is the Cys64.

It belongs to the GlpE family.

It is found in the cytoplasm. The catalysed reaction is thiosulfate + hydrogen cyanide = thiocyanate + sulfite + 2 H(+). The enzyme catalyses thiosulfate + [thioredoxin]-dithiol = [thioredoxin]-disulfide + hydrogen sulfide + sulfite + 2 H(+). Functionally, transferase that catalyzes the transfer of sulfur from thiosulfate to thiophilic acceptors such as cyanide or dithiols. May function in a CysM-independent thiosulfate assimilation pathway by catalyzing the conversion of thiosulfate to sulfite, which can then be used for L-cysteine biosynthesis. The polypeptide is Thiosulfate sulfurtransferase GlpE (Pseudomonas fluorescens (strain ATCC BAA-477 / NRRL B-23932 / Pf-5)).